Reading from the N-terminus, the 294-residue chain is Metallophosphoesterase MPPED2 (294 aa).

Positions 65, 67, 86, 117, and 213 each coordinate Mn(2+). Residue 117–118 (NH) participates in GMP binding. GMP is bound by residues 225 to 226 (KE) and 252 to 255 (GIHE). Histidine 254 serves as a coordination point for Mn(2+).

It belongs to the UPF0046 family. Homodimer. The cofactor is Mn(2+). Requires Co(2+) as cofactor.

Inhibited by nmolar levels of AMP and GMP. Displays low metallophosphoesterase activity (in vitro). May play a role in the development of the nervous system. This chain is Metallophosphoesterase MPPED2 (Mpped2), found in Mus musculus (Mouse).